We begin with the raw amino-acid sequence, 209 residues long: Ras-like protein (209 aa).

10–17 (GGGLVGKS) contacts GTP. Residues 55–63 (YDPTVEDSR) carry the Effector region motif. A Phosphothreonine modification is found at Thr-58. GTP is bound by residues 79–83 (DTAGQ) and 140–143 (NKAD). Cys-206 is modified (cysteine methyl ester). Cys-206 carries S-geranylgeranyl cysteine lipidation. The propeptide at 207–209 (LII) is removed in mature form.

This sequence belongs to the small GTPase superfamily. Ras family. In terms of processing, phosphorylated in the presence of insulin.

Its subcellular location is the cell membrane. It catalyses the reaction GTP + H2O = GDP + phosphate + H(+). Its activity is regulated as follows. Alternates between an inactive form bound to GDP and an active form bound to GTP. Activated by a guanine nucleotide-exchange factor (GEF) and inactivated by a GTPase-activating protein (GAP). This protein is activated by the insulin/insulin (insulin-like)-receptor system. This transition enables the ras protein to interact with the lectin-receptor/lectin complex, a process which ultimately lead to an initiation of an intra-cellular signal-transduction chain. The polypeptide is Ras-like protein (Geodia cydonium (Sponge)).